We begin with the raw amino-acid sequence, 114 residues long: DNA-directed RNA polymerase subunit omega (114 aa).

It belongs to the RNA polymerase subunit omega family. The RNAP catalytic core consists of 2 alpha, 1 beta, 1 beta' and 1 omega subunit. When a sigma factor is associated with the core the holoenzyme is formed, which can initiate transcription.

The catalysed reaction is RNA(n) + a ribonucleoside 5'-triphosphate = RNA(n+1) + diphosphate. Promotes RNA polymerase assembly. Latches the N- and C-terminal regions of the beta' subunit thereby facilitating its interaction with the beta and alpha subunits. The protein is DNA-directed RNA polymerase subunit omega of Erythrobacter litoralis (strain HTCC2594).